We begin with the raw amino-acid sequence, 603 residues long: Putative lipase atg15 (603 aa).

The Cytoplasmic segment spans residues 1 to 20; sequence MDQPHRRTRKWHLMDLSVST. The chain crosses the membrane as a helical; Signal-anchor for type II membrane protein span at residues 21-41; the sequence is LLMSLALVLPSCVSAYQPVYF. The Lumenal portion of the chain corresponds to 42–603; sequence RSQEATPFIP…ITPAPILIDL (562 aa). Asparagine 166, asparagine 201, asparagine 223, asparagine 281, and asparagine 305 each carry an N-linked (GlcNAc...) asparagine glycan. The Charge relay system role is filled by serine 321. An N-linked (GlcNAc...) asparagine glycan is attached at asparagine 467.

It belongs to the AB hydrolase superfamily. Lipase family. As to quaternary structure, binds to both phosphatidylinositol (PI) and phosphatidylinositol 3,5-bisphosphate (PIP2).

It is found in the endosome. Its subcellular location is the multivesicular body membrane. The protein resides in the prevacuolar compartment membrane. It catalyses the reaction a triacylglycerol + H2O = a diacylglycerol + a fatty acid + H(+). Lipase which is essential for lysis of subvacuolar cytoplasm to vacuole targeted bodies and intravacuolar autophagic bodies. Involved in the lysis of intravacuolar multivesicular body (MVB) vesicles. The intravacuolar membrane disintegration by atg15 is critical to life span extension. This is Putative lipase atg15 (atg15) from Emericella nidulans (strain FGSC A4 / ATCC 38163 / CBS 112.46 / NRRL 194 / M139) (Aspergillus nidulans).